The sequence spans 228 residues: Vesicle transport protein SEC20 (228 aa).

At 1–199 the chain is on the cytoplasmic side; sequence MAAPQDVHVR…LITKYNRREL (199 aa). Positions 37–90 form a coiled coil; the sequence is LSALTELNTKVKEKFQQLRHRIQDLEQLAKEQDKESEKQLLLQEVENHKKQMLS. A helical; Anchor for type IV membrane protein transmembrane segment spans residues 200-220; the sequence is TDKLLIFLALALFLATVLYIV. Residues 221-228 are Lumenal-facing; the sequence is KKRLFPFL.

The protein belongs to the SEC20 family. Component of a SNARE complex consisting of STX18, USE1L, BNIP1/SEC20L and SEC22B. Interacts directly with STX18, RINT1/TIP20L and NAPA. Interacts with ZW10 through RINT1. Interacts with BCL2. Interacts with RNF186. Interacts with RNF185. Interacts with SQSTM1; increased by 'Lys-63'-linked polyubiquitination of BNIP1. As to quaternary structure, (Microbial infection) Interacts with adenovirus E1B 19K protein; plays a role in the suppression of cell apoptosis by the viral protein. In terms of processing, polyubiquitinated. 'Lys-63'-linked polyubiquitination by RNF185 increases the interaction with the autophagy receptor SQSTM1. Undergoes 'Lys-29'- and 'Lys-63'-linked polyubiquitination by RNF186 that may regulate BNIP1 localization to the mitochondrion. Isoform 1 is highly expressed in heart, brain, liver skeletal muscle and pancreas. Isoform 3 is moderately expressed in placenta, lung and kidney. Isoform 4 is highly expressed in testis and small intestine.

The protein resides in the endoplasmic reticulum membrane. The protein localises to the mitochondrion membrane. Functionally, as part of a SNARE complex may be involved in endoplasmic reticulum membranes fusion and be required for the maintenance of endoplasmic reticulum organization. Also plays a role in apoptosis. It is for instance required for endoplasmic reticulum stress-induced apoptosis. As a substrate of RNF185 interacting with SQSTM1, might also be involved in mitochondrial autophagy. This Homo sapiens (Human) protein is Vesicle transport protein SEC20 (BNIP1).